Consider the following 433-residue polypeptide: 3-phosphoshikimate 1-carboxyvinyltransferase (433 aa).

3 residues coordinate 3-phosphoshikimate: K21, S22, and R26. Position 21 (K21) interacts with phosphoenolpyruvate. The phosphoenolpyruvate site is built by G92 and R120. Residues S166, Q168, D317, and K344 each contribute to the 3-phosphoshikimate site. Q168 lines the phosphoenolpyruvate pocket. D317 serves as the catalytic Proton acceptor. Positions 348 and 391 each coordinate phosphoenolpyruvate.

The protein belongs to the EPSP synthase family. As to quaternary structure, monomer.

The protein resides in the cytoplasm. It carries out the reaction 3-phosphoshikimate + phosphoenolpyruvate = 5-O-(1-carboxyvinyl)-3-phosphoshikimate + phosphate. It participates in metabolic intermediate biosynthesis; chorismate biosynthesis; chorismate from D-erythrose 4-phosphate and phosphoenolpyruvate: step 6/7. In terms of biological role, catalyzes the transfer of the enolpyruvyl moiety of phosphoenolpyruvate (PEP) to the 5-hydroxyl of shikimate-3-phosphate (S3P) to produce enolpyruvyl shikimate-3-phosphate and inorganic phosphate. The polypeptide is 3-phosphoshikimate 1-carboxyvinyltransferase (Caldicellulosiruptor bescii (strain ATCC BAA-1888 / DSM 6725 / KCTC 15123 / Z-1320) (Anaerocellum thermophilum)).